A 263-amino-acid polypeptide reads, in one-letter code: Orotidine 5'-phosphate decarboxylase (263 aa).

Residues aspartate 36, 58–60 (KTH), 90–99 (DRKFADIGNT), tyrosine 216, and arginine 234 each bind substrate. Lysine 92 serves as the catalytic Proton donor.

The protein belongs to the OMP decarboxylase family.

The catalysed reaction is orotidine 5'-phosphate + H(+) = UMP + CO2. The protein operates within pyrimidine metabolism; UMP biosynthesis via de novo pathway; UMP from orotate: step 2/2. In Komagataella pastoris (Yeast), this protein is Orotidine 5'-phosphate decarboxylase (URA3).